Here is a 374-residue protein sequence, read N- to C-terminus: 4-hydroxy-3-methylbut-2-en-1-yl diphosphate synthase (flavodoxin) (374 aa).

[4Fe-4S] cluster contacts are provided by cysteine 272, cysteine 275, cysteine 307, and glutamate 314.

Belongs to the IspG family. It depends on [4Fe-4S] cluster as a cofactor.

It catalyses the reaction (2E)-4-hydroxy-3-methylbut-2-enyl diphosphate + oxidized [flavodoxin] + H2O + 2 H(+) = 2-C-methyl-D-erythritol 2,4-cyclic diphosphate + reduced [flavodoxin]. The protein operates within isoprenoid biosynthesis; isopentenyl diphosphate biosynthesis via DXP pathway; isopentenyl diphosphate from 1-deoxy-D-xylulose 5-phosphate: step 5/6. Its function is as follows. Converts 2C-methyl-D-erythritol 2,4-cyclodiphosphate (ME-2,4cPP) into 1-hydroxy-2-methyl-2-(E)-butenyl 4-diphosphate. In Acidiphilium cryptum (strain JF-5), this protein is 4-hydroxy-3-methylbut-2-en-1-yl diphosphate synthase (flavodoxin).